Consider the following 458-residue polypeptide: Argininosuccinate lyase (458 aa).

This sequence belongs to the lyase 1 family. Argininosuccinate lyase subfamily.

The protein resides in the cytoplasm. It catalyses the reaction 2-(N(omega)-L-arginino)succinate = fumarate + L-arginine. It participates in amino-acid biosynthesis; L-arginine biosynthesis; L-arginine from L-ornithine and carbamoyl phosphate: step 3/3. This is Argininosuccinate lyase from Glaesserella parasuis serovar 5 (strain SH0165) (Haemophilus parasuis).